Consider the following 482-residue polypeptide: tRNA sulfurtransferase (482 aa).

Residues 61–165 enclose the THUMP domain; the sequence is LAIRDALTRI…DDRLLLIKGR (105 aa). Residues 183-184, Lys-265, Gly-287, and Gln-296 contribute to the ATP site; that span reads LI. A disulfide bond links Cys-344 and Cys-456. Residues 404 to 482 form the Rhodanese domain; it reads FGANDVILDI…GFANVKVYRP (79 aa). Residue Cys-456 is the Cysteine persulfide intermediate of the active site.

It belongs to the ThiI family.

It localises to the cytoplasm. The catalysed reaction is [ThiI sulfur-carrier protein]-S-sulfanyl-L-cysteine + a uridine in tRNA + 2 reduced [2Fe-2S]-[ferredoxin] + ATP + H(+) = [ThiI sulfur-carrier protein]-L-cysteine + a 4-thiouridine in tRNA + 2 oxidized [2Fe-2S]-[ferredoxin] + AMP + diphosphate. It catalyses the reaction [ThiS sulfur-carrier protein]-C-terminal Gly-Gly-AMP + S-sulfanyl-L-cysteinyl-[cysteine desulfurase] + AH2 = [ThiS sulfur-carrier protein]-C-terminal-Gly-aminoethanethioate + L-cysteinyl-[cysteine desulfurase] + A + AMP + 2 H(+). It functions in the pathway cofactor biosynthesis; thiamine diphosphate biosynthesis. Functionally, catalyzes the ATP-dependent transfer of a sulfur to tRNA to produce 4-thiouridine in position 8 of tRNAs, which functions as a near-UV photosensor. Also catalyzes the transfer of sulfur to the sulfur carrier protein ThiS, forming ThiS-thiocarboxylate. This is a step in the synthesis of thiazole, in the thiamine biosynthesis pathway. The sulfur is donated as persulfide by IscS. The polypeptide is tRNA sulfurtransferase (Salmonella typhi).